The chain runs to 795 residues: Copper-exporting P-type ATPase (795 aa).

HMA domains lie at 5-70 (QNAT…YDVV) and 72-138 (DKAE…YDAQ). C16, C19, C83, and C86 together coordinate Cu(+). 6 helical membrane passes run 161 to 181 (LMIS…HLFN), 187 to 207 (ILMN…IIGW), 224 to 244 (MDVL…YEMI), 256 to 276 (LYFE…YLEA), 412 to 432 (YFVP…ITLV), and 440 to 460 (ALVA…GLAT). D496 (4-aspartylphosphate intermediate) is an active-site residue. 2 residues coordinate Mg(2+): D690 and D694. Helical transmembrane passes span 747–764 (NLFW…IAAM) and 770–788 (WIAG…SNAL).

It belongs to the cation transport ATPase (P-type) (TC 3.A.3) family. Type IB subfamily.

Its subcellular location is the cell membrane. The enzyme catalyses Cu(+)(in) + ATP + H2O = Cu(+)(out) + ADP + phosphate + H(+). Its function is as follows. Involved in copper export. The polypeptide is Copper-exporting P-type ATPase (copA) (Staphylococcus haemolyticus (strain JCSC1435)).